The sequence spans 29 residues: Dermaseptin-1.2TR (29 aa).

V29 carries the post-translational modification Valine amide.

As to expression, expressed by the skin glands.

It localises to the secreted. Has antimicrobial activity. This Phyllomedusa trinitatis (Trinidad leaf frog) protein is Dermaseptin-1.2TR.